A 381-amino-acid chain; its full sequence is Endophilin-A homolog (381 aa).

Residues 1–21 (MSLSGLRKQFNKANQYLSETM) are membrane-binding amphipathic helix. One can recognise a BAR domain in the interval 18–247 (SETMGAAEPT…LGHRIKDAAA (230 aa)). A coiled-coil region spans residues 170–238 (CKKRQQRRDD…QCLENLQQQL (69 aa)). Positions 246-323 (AARPREEHVP…PPPLSQQQKP (78 aa)) are disordered. Residues 260–271 (ANESRTPRSSFR) show a composition bias toward polar residues. Over residues 305 to 317 (YQGPPPGGLPPPL) the composition is skewed to pro residues. The 60-residue stretch at 320–379 (QQKPQCRALFDFDAQSEGELDFKEGTLIELVSQIDENWYEGRVNGKTGLFPVTYVQVLVP) folds into the SH3 domain.

The protein belongs to the endophilin family. In terms of assembly, may form a homodimer (via the BAR domain). As to expression, expressed in neurons and posterior intestine.

Its subcellular location is the synapse. The protein localises to the cytoplasmic vesicle. The protein resides in the secretory vesicle. It is found in the synaptic vesicle. It localises to the membrane. In terms of biological role, involved in synaptic vesicle (SV) recycling in neurons probably by regulating clathrin-mediated endocytosis. By controlling SV endocytosis, regulates the rate of excitatory postsynaptic currents (EPSCs) at neuromuscular junctions and thus locomotion. In a similar manner, involved in necrotic neuronal cell death induced by abnormal hyperactivation of ion channels. Plays a minor role in responses to mechanical stimuli. Plays a minor role in unc-26/synaptojanin localization to synapses. The polypeptide is Endophilin-A homolog (Caenorhabditis elegans).